A 392-amino-acid chain; its full sequence is ATP phosphoribosyltransferase regulatory subunit (392 aa).

The protein belongs to the class-II aminoacyl-tRNA synthetase family. HisZ subfamily. As to quaternary structure, heteromultimer composed of HisG and HisZ subunits.

Its subcellular location is the cytoplasm. Its pathway is amino-acid biosynthesis; L-histidine biosynthesis; L-histidine from 5-phospho-alpha-D-ribose 1-diphosphate: step 1/9. Functionally, required for the first step of histidine biosynthesis. May allow the feedback regulation of ATP phosphoribosyltransferase activity by histidine. This Gloeobacter violaceus (strain ATCC 29082 / PCC 7421) protein is ATP phosphoribosyltransferase regulatory subunit.